We begin with the raw amino-acid sequence, 309 residues long: HPr kinase/phosphorylase (309 aa).

Active-site residues include His138 and Lys159. Residue 153–160 (GKSGVGKS) coordinates ATP. Ser160 is a binding site for Mg(2+). Asp177 functions as the Proton acceptor; for phosphorylation activity. Proton donor; for dephosphorylation activity in the catalytic mechanism. Positions 201 to 210 (LEIRGLGIIN) are important for the catalytic mechanism of both phosphorylation and dephosphorylation. Glu202 provides a ligand contact to Mg(2+). Arg243 is a catalytic residue. Residues 264 to 269 (PVRPGR) are important for the catalytic mechanism of dephosphorylation.

The protein belongs to the HPrK/P family. Homohexamer. The cofactor is Mg(2+).

It carries out the reaction [HPr protein]-L-serine + ATP = [HPr protein]-O-phospho-L-serine + ADP + H(+). The enzyme catalyses [HPr protein]-O-phospho-L-serine + phosphate + H(+) = [HPr protein]-L-serine + diphosphate. In terms of biological role, catalyzes the ATP- as well as the pyrophosphate-dependent phosphorylation of a specific serine residue in HPr, a phosphocarrier protein of the phosphoenolpyruvate-dependent sugar phosphotransferase system (PTS). HprK/P also catalyzes the pyrophosphate-producing, inorganic phosphate-dependent dephosphorylation (phosphorolysis) of seryl-phosphorylated HPr (P-Ser-HPr). The two antagonistic activities of HprK/P are regulated by several intracellular metabolites, which change their concentration in response to the absence or presence of rapidly metabolisable carbon sources (glucose, fructose, etc.) in the growth medium. Also phosphorylates/dephosphorylates the HPr-like catabolite repression protein crh on a specific serine residue. Therefore, by controlling the phosphorylation state of HPr and crh, HPrK/P is a sensor enzyme that plays a major role in the regulation of carbon metabolism and sugar transport: it mediates carbon catabolite repression (CCR), and regulates PTS-catalyzed carbohydrate uptake and inducer exclusion. This chain is HPr kinase/phosphorylase, found in Geobacillus thermodenitrificans (strain NG80-2).